The chain runs to 257 residues: Homeobox protein EMX1 (257 aa).

Residues 159-218 (PKRIRTAFSPSQLLRLERAFEKNHYVVGAERKQLAGSLSLSETQVKVWFQNRRTKYKRQK) constitute a DNA-binding region (homeobox). The tract at residues 216–257 (RQKLEEEGPESEQKKKGSHHINRWRIATKQANGEDIDVTSND) is disordered. A compositionally biased stretch (basic and acidic residues) spans 217 to 230 (QKLEEEGPESEQKK).

This sequence belongs to the EMX homeobox family. Interacts with WRD11 (via the N-terminal and the central portion of the protein); the interaction associates EMX1 with GLI3. As to expression, cerebral cortex. Expressed in the olfactory bulbs.

Its subcellular location is the nucleus. Transcription factor, which in cooperation with EMX2, acts to generate the boundary between the roof and archipallium in the developing brain. May function in combinations with OTX1/2 to specify cell fates in the developing central nervous system. This chain is Homeobox protein EMX1 (Emx1), found in Mus musculus (Mouse).